A 205-amino-acid chain; its full sequence is uncharacterized protein (205 aa).

Active-site charge relay system residues include Ser-119 and His-160.

It belongs to the peptidase S51 family.

This is an uncharacterized protein from Listeria monocytogenes serovar 1/2a (strain ATCC BAA-679 / EGD-e).